The primary structure comprises 300 residues: Sulfate adenylyltransferase subunit 2 (300 aa).

The segment at 281 to 300 (RAIDRDEAGSMEKKKREGYF) is disordered.

Belongs to the PAPS reductase family. CysD subfamily. In terms of assembly, heterodimer composed of CysD, the smaller subunit, and CysN.

It catalyses the reaction sulfate + ATP + H(+) = adenosine 5'-phosphosulfate + diphosphate. It functions in the pathway sulfur metabolism; hydrogen sulfide biosynthesis; sulfite from sulfate: step 1/3. Its function is as follows. With CysN forms the ATP sulfurylase (ATPS) that catalyzes the adenylation of sulfate producing adenosine 5'-phosphosulfate (APS) and diphosphate, the first enzymatic step in sulfur assimilation pathway. APS synthesis involves the formation of a high-energy phosphoric-sulfuric acid anhydride bond driven by GTP hydrolysis by CysN coupled to ATP hydrolysis by CysD. The sequence is that of Sulfate adenylyltransferase subunit 2 from Brucella abortus (strain 2308).